Reading from the N-terminus, the 467-residue chain is Glycine--tRNA ligase (467 aa).

Residues R100 and E175 each contribute to the substrate site. ATP is bound by residues 207 to 209, 217 to 222, 291 to 292, and 335 to 338; these read RNE, FRTREF, EL, and GADR. 222-226 provides a ligand contact to substrate; sequence FEQME. 331–335 provides a ligand contact to substrate; the sequence is EPSLG.

This sequence belongs to the class-II aminoacyl-tRNA synthetase family. In terms of assembly, homodimer.

It localises to the cytoplasm. It catalyses the reaction tRNA(Gly) + glycine + ATP = glycyl-tRNA(Gly) + AMP + diphosphate. Functionally, catalyzes the attachment of glycine to tRNA(Gly). The sequence is that of Glycine--tRNA ligase from Clostridium perfringens (strain 13 / Type A).